The following is a 439-amino-acid chain: Tol-Pal system protein TolB (439 aa).

A signal peptide spans 1–22; sequence MKKPLRWLAALTVLLLPLSALA.

Belongs to the TolB family. In terms of assembly, the Tol-Pal system is composed of five core proteins: the inner membrane proteins TolA, TolQ and TolR, the periplasmic protein TolB and the outer membrane protein Pal. They form a network linking the inner and outer membranes and the peptidoglycan layer.

It is found in the periplasm. Its function is as follows. Part of the Tol-Pal system, which plays a role in outer membrane invagination during cell division and is important for maintaining outer membrane integrity. The sequence is that of Tol-Pal system protein TolB from Xanthomonas oryzae pv. oryzae (strain PXO99A).